A 221-amino-acid polypeptide reads, in one-letter code: Triosephosphate isomerase (221 aa).

Residue 8-10 (NLK) participates in substrate binding. Catalysis depends on His-92, which acts as the Electrophile. Residue Glu-140 is the Proton acceptor of the active site. Substrate contacts are provided by residues Ile-145, Gly-180, and 201–202 (AS).

Belongs to the triosephosphate isomerase family. As to quaternary structure, homotetramer; dimer of dimers.

The protein resides in the cytoplasm. The catalysed reaction is D-glyceraldehyde 3-phosphate = dihydroxyacetone phosphate. Its pathway is carbohydrate biosynthesis; gluconeogenesis. It participates in carbohydrate degradation; glycolysis; D-glyceraldehyde 3-phosphate from glycerone phosphate: step 1/1. Its function is as follows. Involved in the gluconeogenesis. Catalyzes stereospecifically the conversion of dihydroxyacetone phosphate (DHAP) to D-glyceraldehyde-3-phosphate (G3P). In Methanococcoides burtonii (strain DSM 6242 / NBRC 107633 / OCM 468 / ACE-M), this protein is Triosephosphate isomerase.